The following is a 555-amino-acid chain: Potassium-transporting ATPase potassium-binding subunit (555 aa).

Transmembrane regions (helical) follow at residues 2–22, 60–80, 130–150, 173–193, 246–266, 278–298, 374–394, 412–432, 483–503, and 525–545; these read IWVA…PTGI, QYAL…YFIF, IGIT…VMAF, VFLP…VPQT, MSNI…PFTY, ILFV…TTSE, AGFV…GLMV, LIAV…ALAL, LVMF…AASL, and GIFI…MLVL.

It belongs to the KdpA family. In terms of assembly, the system is composed of three essential subunits: KdpA, KdpB and KdpC.

It localises to the cell membrane. Functionally, part of the high-affinity ATP-driven potassium transport (or Kdp) system, which catalyzes the hydrolysis of ATP coupled with the electrogenic transport of potassium into the cytoplasm. This subunit binds the extracellular potassium ions and delivers the ions to the membrane domain of KdpB through an intramembrane tunnel. This is Potassium-transporting ATPase potassium-binding subunit from Bacillus cereus (strain AH187).